We begin with the raw amino-acid sequence, 523 residues long: GMP synthase [glutamine-hydrolyzing] (523 aa).

A Glutamine amidotransferase type-1 domain is found at 8–205; the sequence is KILILDFGSQ…VVNICGCETK (198 aa). The Nucleophile role is filled by cysteine 85. Active-site residues include histidine 179 and glutamate 181. A GMPS ATP-PPase domain is found at 206-398; sequence WTAENIIEDA…LGLPAEMINR (193 aa). ATP is bound at residue 233 to 239; that stretch reads SGGVDSS.

Homodimer.

The enzyme catalyses XMP + L-glutamine + ATP + H2O = GMP + L-glutamate + AMP + diphosphate + 2 H(+). Its pathway is purine metabolism; GMP biosynthesis; GMP from XMP (L-Gln route): step 1/1. Its function is as follows. Catalyzes the synthesis of GMP from XMP. This is GMP synthase [glutamine-hydrolyzing] (guaA) from Haemophilus influenzae (strain ATCC 51907 / DSM 11121 / KW20 / Rd).